The sequence spans 90 residues: MKLTILLLVAALLVLTQARTERRRVKSRKTSSTYDDEMATFCWSYWNEFQYSYPYTYVQPCLTLGKACTTNSDCCSKYCNTKMCKINWEG.

The first 18 residues, 1–18 (MKLTILLLVAALLVLTQA), serve as a signal peptide directing secretion. A propeptide spanning residues 19–29 (RTERRRVKSRK) is cleaved from the precursor. 3 disulfide bridges follow: Cys-61–Cys-75, Cys-68–Cys-79, and Cys-74–Cys-84. Glu-89 carries the post-translational modification Glutamic acid 1-amide.

This sequence belongs to the conotoxin O2 superfamily. Expressed by the venom duct.

Its subcellular location is the secreted. Its function is as follows. Probable neurotoxin. The chain is Conotoxin Im6.2 from Conus imperialis (Imperial cone).